The following is a 214-amino-acid chain: 3-isopropylmalate dehydratase small subunit (214 aa).

The protein belongs to the LeuD family. LeuD type 1 subfamily. In terms of assembly, heterodimer of LeuC and LeuD.

It catalyses the reaction (2R,3S)-3-isopropylmalate = (2S)-2-isopropylmalate. Its pathway is amino-acid biosynthesis; L-leucine biosynthesis; L-leucine from 3-methyl-2-oxobutanoate: step 2/4. In terms of biological role, catalyzes the isomerization between 2-isopropylmalate and 3-isopropylmalate, via the formation of 2-isopropylmaleate. The protein is 3-isopropylmalate dehydratase small subunit of Pseudomonas putida (strain ATCC 47054 / DSM 6125 / CFBP 8728 / NCIMB 11950 / KT2440).